A 264-amino-acid polypeptide reads, in one-letter code: Proteasome assembly chaperone 2 (264 aa).

At Thr-137 the chain carries Phosphothreonine.

It belongs to the PSMG2 family. Forms a heterodimer with PSMG1. The PSMG1-PSMG2 heterodimer interacts directly with the PSMA5 and PSMA7 proteasome alpha subunits. In terms of processing, degraded by the proteasome upon completion of 20S proteasome maturation.

Its subcellular location is the nucleus. Functionally, chaperone protein which promotes assembly of the 20S proteasome as part of a heterodimer with PSMG1. The PSMG1-PSMG2 heterodimer binds to the PSMA5 and PSMA7 proteasome subunits, promotes assembly of the proteasome alpha subunits into the heteroheptameric alpha ring and prevents alpha ring dimerization. The protein is Proteasome assembly chaperone 2 of Bos taurus (Bovine).